Here is a 240-residue protein sequence, read N- to C-terminus: Leucyl/phenylalanyl-tRNA--protein transferase (240 aa).

The protein belongs to the L/F-transferase family.

It localises to the cytoplasm. It carries out the reaction N-terminal L-lysyl-[protein] + L-leucyl-tRNA(Leu) = N-terminal L-leucyl-L-lysyl-[protein] + tRNA(Leu) + H(+). The catalysed reaction is N-terminal L-arginyl-[protein] + L-leucyl-tRNA(Leu) = N-terminal L-leucyl-L-arginyl-[protein] + tRNA(Leu) + H(+). It catalyses the reaction L-phenylalanyl-tRNA(Phe) + an N-terminal L-alpha-aminoacyl-[protein] = an N-terminal L-phenylalanyl-L-alpha-aminoacyl-[protein] + tRNA(Phe). Its function is as follows. Functions in the N-end rule pathway of protein degradation where it conjugates Leu, Phe and, less efficiently, Met from aminoacyl-tRNAs to the N-termini of proteins containing an N-terminal arginine or lysine. This Maridesulfovibrio salexigens (strain ATCC 14822 / DSM 2638 / NCIMB 8403 / VKM B-1763) (Desulfovibrio salexigens) protein is Leucyl/phenylalanyl-tRNA--protein transferase.